Here is a 334-residue protein sequence, read N- to C-terminus: Proline-serine-threonine phosphatase-interacting protein 2 (334 aa).

Residues 4-264 (SLFKGNFWST…SLETCSIEKD (261 aa)) enclose the F-BAR domain. Residues 66-163 (GQSEINTLKR…AEQAVHRSAN (98 aa)) adopt a coiled-coil conformation. A disordered region spans residues 288 to 322 (YSPQRNAAPPGKTTGPNPARRGPLPVPKRIPDDPD). Phosphotyrosine occurs at positions 323 and 329.

Phosphorylated on tyrosine. In terms of tissue distribution, expressed in macrophage-containing tissues, including bone marrow, spleen, liver, kidney, intestine and brain.

It is found in the cytoplasm. The protein localises to the membrane. Functionally, binds to F-actin. May be involved in regulation of the actin cytoskeleton. The protein is Proline-serine-threonine phosphatase-interacting protein 2 (Pstpip2) of Mus musculus (Mouse).